A 502-amino-acid chain; its full sequence is Zinc finger protein 488 (502 aa).

In terms of domain architecture, SET spans 8-130 (RSLWTNDSKI…EGEELLVWYD (123 aa)). Y129 lines the S-adenosyl-L-methionine pocket. The C2H2-type 1; atypical zinc finger occupies 151–174 (YTCTRCGQAFKNENPFLAHCRFLC). Disordered stretches follow at residues 267-303 (SEPT…KSSR) and 338-361 (PSKR…LDSF). The segment covering 269-286 (PTDNAQTNESKISKNSAF) has biased composition (polar residues). 2 C2H2-type zinc fingers span residues 438 to 460 (NWCA…MRSH) and 479 to 501 (LTCP…MTSH).

Belongs to the krueppel C2H2-type zinc-finger protein family. Expressed in pMN progenitors and oligodendrocyte lineage cells in the embryo with expression declining in oligodendrocytes undergoing differentiation.

It localises to the nucleus. In terms of biological role, transcriptional repressor. May have histone methyltransferase activity. Negatively regulates shh signaling activity in pMN progenitor cells which prevents their switch from motor neuron to oligodendrocyte precursor cell production. Independently of shh activity, also regulates oligodendrocyte formation. This chain is Zinc finger protein 488, found in Danio rerio (Zebrafish).